The following is a 460-amino-acid chain: Nuclear distribution protein PAC1-1 (460 aa).

A LisH domain is found at 9–41 (QADELHRALIAYLTAANLPNTAAALREELNLGE). The stretch at 74-96 (LVTQIMDLESRNHILQSELDNAT) forms a coiled coil. The segment covering 90 to 100 (SELDNATPTSR) has biased composition (polar residues). The disordered stretch occupies residues 90-115 (SELDNATPTSRQNKDPVAWLPRAPPR). WD repeat units follow at residues 120–161 (SHRD…RTIK), 163–203 (HTKA…KNIR), 207–247 (GHDH…CVKT), 250–289 (GHAE…PEPR), 294–354 (GHEH…KTLA), 355–394 (GHDN…KCVK), 399–439 (AHGH…VTPD), and 441–460 (QIRC…IFAN).

Belongs to the WD repeat LIS1/nudF family. In terms of assembly, self-associates. Interacts with NDL1 and dynein.

The protein localises to the cytoplasm. The protein resides in the cytoskeleton. Its subcellular location is the spindle pole. Positively regulates the activity of the minus-end directed microtubule motor protein dynein. May enhance dynein-mediated microtubule sliding by targeting dynein to the microtubule plus end. Required for nuclear migration during vegetative growth as well as development. Required for retrograde early endosome (EE) transport from the hyphal tip. Required for localization of dynein to the mitotic spindle poles. Recruits additional proteins to the dynein complex at SPBs. The protein is Nuclear distribution protein PAC1-1 of Sordaria macrospora (strain ATCC MYA-333 / DSM 997 / K(L3346) / K-hell).